Reading from the N-terminus, the 771-residue chain is Glucocorticoid receptor (771 aa).

Residues 1-415 (MDLKESVTSS…STTTGPPPKL (415 aa)) form a modulating region. A Phosphothreonine modification is found at threonine 8. Arginine 22 bears the Omega-N-methylarginine mark. 5 positions are modified to phosphoserine: serine 44, serine 133, serine 199, serine 207, and serine 222. Over residues 129-172 (SRSTSVPENPKNSASAVSGTPTEEFPKTQSDLSSEQENLKSQAG) the composition is skewed to polar residues. Residues 129–184 (SRSTSVPENPKNSASAVSGTPTEEFPKTQSDLSSEQENLKSQAGTNGGNVKFPPDQ) are disordered. Lysine 254 participates in a covalent cross-link: Glycyl lysine isopeptide (Lys-Gly) (interchain with G-Cter in SUMO2). Position 263 is a phosphoserine (serine 263). Residues lysine 273 and lysine 289 each participate in a glycyl lysine isopeptide (Lys-Gly) (interchain with G-Cter in SUMO); alternate cross-link. Residues lysine 273 and lysine 289 each participate in a glycyl lysine isopeptide (Lys-Gly) (interchain with G-Cter in SUMO2); alternate cross-link. Phosphoserine occurs at positions 303 and 400. Residues 390–411 (SSPGLRPDVSSPPSSSSTTTGP) are disordered. Over residues 400–409 (SPPSSSSTTT) the composition is skewed to low complexity. Lysine 414 is covalently cross-linked (Glycyl lysine isopeptide (Lys-Gly) (interchain with G-Cter in ubiquitin)). NR C4-type zinc fingers lie at residues 416–436 (CLVC…CGSC) and 452–476 (CAGR…YRKC). The nuclear receptor DNA-binding region spans 416–481 (CLVCSDELSG…RYRKCLQAGM (66 aa)). An N6-acetyllysine mark is found at lysine 475, lysine 487, lysine 489, and lysine 490. The interval 480 to 771 (GMNLQARKTK…DIKKLLFHQK (292 aa)) is interaction with CLOCK. The tract at residues 482–517 (NLQARKTKKKIKGIQQATTGVSQNTSENPNKTIVPA) is hinge. The NR LBD domain maps to 518 to 752 (TLPQLTPTLV…FPEMLAEIIT (235 aa)). Residues 526-691 (LVSLLEVIEP…EIRMTYIKEL (166 aa)) form an interaction with CRY1 region. Lysine 697 participates in a covalent cross-link: Glycyl lysine isopeptide (Lys-Gly) (interchain with G-Cter in SUMO).

It belongs to the nuclear hormone receptor family. NR3 subfamily. Heteromultimeric cytoplasmic complex with HSP90AA1, HSPA1A/HSPA1B, and FKBP5 or another immunophilin such as PPID, STIP1, or the immunophilin homolog PPP5C. Upon ligand binding FKBP5 dissociates from the complex and FKBP4 takes its place, thereby linking the complex to dynein and mediating transport to the nucleus, where the complex dissociates. Probably forms a complex composed of chaperones HSP90 and HSP70, co-chaperones CDC37, PPP5C, TSC1 and client protein TSC2, CDK4, AKT, RAF1 and NR3C1; this complex does not contain co-chaperones STIP1/HOP and PTGES3/p23. Directly interacts with UNC45A. Binds to DNA as a homodimer, and as heterodimer with NR3C2 or the retinoid X receptor. Binds STAT5A and STAT5B homodimers and heterodimers. Interacts with NRIP1, POU2F1, POU2F2 and TRIM28. Interacts with several coactivator complexes, including the SMARCA4 complex, CREBBP/EP300, TADA2L (Ada complex) and p160 coactivators such as NCOA2 and NCOA6. Interaction with BAG1 inhibits transactivation. Interacts with HEXIM1 and TGFB1I1. Interacts with NCOA1. Interacts with NCOA3, SMARCA4, SMARCC1, SMARCD1, and SMARCE1. Interacts with CLOCK, CRY1 and CRY2 in a ligand-dependent fashion. Interacts with CIART. Interacts with RWDD3. Interacts with UBE2I/UBC9 and this interaction is enhanced in the presence of RWDD3. Interacts with GRIP1. Interacts with NR4A3 (via nuclear receptor DNA-binding domain), represses transcription activity of NR4A3 on the POMC promoter Nur response element (NurRE). Directly interacts with PNRC2 to attract and form a complex with UPF1 and DCP1A; the interaction leads to rapid mRNA degradation. Interacts with GSK3B. Interacts with FNIP1 and FNIP2. Interacts (via C-terminus) with HNRNPU (via C-terminus). Interacts with MCM3AP. Interacts (via domain NR LBD) with HSP90AA1 and HSP90AB1. In the absence of hormonal ligand, interacts with TACC1. Interacts (via NR LBD domain) with ZNF764 (via KRAB domain); the interaction regulates transcription factor activity of NR3C1 by directing its actions toward certain biologic pathways. Acetylation by CLOCK reduces its binding to glucocorticoid response elements and its transcriptional activity. Post-translationally, increased proteasome-mediated degradation in response to glucocorticoids. In terms of processing, phosphorylated in the absence of hormone; becomes hyperphosphorylated in the presence of glucocorticoid. The Ser-199, Ser-222 and Ser-400-phosphorylated forms are mainly cytoplasmic, and the Ser-207-phosphorylated form is nuclear. Phosphorylation at Ser-207 increases transcriptional activity. Phosphorylation at Ser-199, Ser-222 and Ser-400 decreases signaling capacity. Phosphorylation at Ser-400 may protect from glucocorticoid-induced apoptosis. Phosphorylation at Ser-199 and Ser-207 is not required in regulation of chromosome segregation. May be dephosphorylated by PPP5C, attenuates NR3C1 action. Ubiquitinated by UBR5, leading to its degradation: UBR5 specifically recognizes and binds ligand-bound NR3C1 when it is not associated with coactivators (NCOAs). In presence of NCOAs, the UBR5-degron is not accessible, preventing its ubiquitination and degradation. Post-translationally, sumoylation at Lys-273 and Lys-289 negatively regulates its transcriptional activity. Sumoylation at Lys-697 positively regulates its transcriptional activity in the presence of RWDD3. Sumoylation at Lys-273 and Lys-289 is dispensable whereas sumoylation at Lys-697 is critical for the stimulatory effect of RWDD3 on its transcriptional activity. Heat shock increases sumoylation in a RWDD3-dependent manner.

The protein localises to the cytoplasm. The protein resides in the nucleus. Its subcellular location is the mitochondrion. It localises to the cytoskeleton. It is found in the spindle. The protein localises to the microtubule organizing center. The protein resides in the centrosome. Its subcellular location is the chromosome. It localises to the nucleoplasm. Functionally, receptor for glucocorticoids (GC). Has a dual mode of action: as a transcription factor that binds to glucocorticoid response elements (GRE), both for nuclear and mitochondrial DNA, and as a modulator of other transcription factors. Affects inflammatory responses, cellular proliferation and differentiation in target tissues. Involved in chromatin remodeling. Plays a role in rapid mRNA degradation by binding to the 5' UTR of target mRNAs and interacting with PNRC2 in a ligand-dependent manner which recruits the RNA helicase UPF1 and the mRNA-decapping enzyme DCP1A, leading to RNA decay. Could act as a coactivator for STAT5-dependent transcription upon growth hormone (GH) stimulation and could reveal an essential role of hepatic GR in the control of body growth. Mediates glucocorticoid-induced apoptosis. Promotes accurate chromosome segregation during mitosis. May act as a tumor suppressor. May play a negative role in adipogenesis through the regulation of lipolytic and antilipogenic gene expression. The sequence is that of Glucocorticoid receptor (NR3C1) from Cavia porcellus (Guinea pig).